A 451-amino-acid polypeptide reads, in one-letter code: MSSSSESHLATAKTALTAVASVAAAAILARSVVQDYMPNEVHEYISHGFRRFFSYFSYQMTAVIEEFGGFEHNQVFEAAEAYLSTKISNSTRRIKVNKLEKQSNYSVTVERDEEVVDIFDGVKLSWILVCRHVDKKDFRNPRDLNSTLKSEVRSYELSFRKKFKNMVLESYLPFVVEQAASIKQKFKTLKIFTVDSYSVEWTSVTLDHPSTFRTLALDPEVKKNLVEDLDRFVQRKGFYGRVGKAWKRGYLLYGPPGTGKSSLIAAIANHLNFDIYDLDLTSLNNNAELRRLLMSTANRSILVVEDIDCSIELKDRSTDQENNDPLHKTVTLSGLLNFVDGLWSSCGNERIIVFTTNYREKLDPALLRPGRMDMHIHMSYCTPAAFKVLASNYLEIQDHILFEQIEEFIREIEVTPAEVAEQLMRSDSVDKVLQGLVEFLKAKKQIDNSKA.

Residues 1–25 form the signal peptide; sequence MSSSSESHLATAKTALTAVASVAAA. 254–261 lines the ATP pocket; that stretch reads GPPGTGKS.

This sequence belongs to the AAA ATPase family. BCS1 subfamily. The cofactor is Mg(2+).

It catalyses the reaction ATP + H2O = ADP + phosphate + H(+). In Arabidopsis thaliana (Mouse-ear cress), this protein is AAA-ATPase At3g50940.